A 227-amino-acid chain; its full sequence is Phosphatidylserine decarboxylase proenzyme (227 aa).

Ser184 (schiff-base intermediate with substrate; via pyruvic acid) is an active-site residue. The residue at position 184 (Ser184) is a Pyruvic acid (Ser); by autocatalysis.

This sequence belongs to the phosphatidylserine decarboxylase family. PSD-A subfamily. Heterodimer of a large membrane-associated beta subunit and a small pyruvoyl-containing alpha subunit. Pyruvate is required as a cofactor. Post-translationally, is synthesized initially as an inactive proenzyme. Formation of the active enzyme involves a self-maturation process in which the active site pyruvoyl group is generated from an internal serine residue via an autocatalytic post-translational modification. Two non-identical subunits are generated from the proenzyme in this reaction, and the pyruvate is formed at the N-terminus of the alpha chain, which is derived from the carboxyl end of the proenzyme. The post-translation cleavage follows an unusual pathway, termed non-hydrolytic serinolysis, in which the side chain hydroxyl group of the serine supplies its oxygen atom to form the C-terminus of the beta chain, while the remainder of the serine residue undergoes an oxidative deamination to produce ammonia and the pyruvoyl prosthetic group on the alpha chain.

It is found in the cell membrane. It catalyses the reaction a 1,2-diacyl-sn-glycero-3-phospho-L-serine + H(+) = a 1,2-diacyl-sn-glycero-3-phosphoethanolamine + CO2. The protein operates within phospholipid metabolism; phosphatidylethanolamine biosynthesis; phosphatidylethanolamine from CDP-diacylglycerol: step 2/2. Functionally, catalyzes the formation of phosphatidylethanolamine (PtdEtn) from phosphatidylserine (PtdSer). This Ehrlichia ruminantium (strain Welgevonden) protein is Phosphatidylserine decarboxylase proenzyme.